The primary structure comprises 218 residues: MTILKQLITKANLILPSVDKKVATLDSLVSVFKEIKCKDLKIDKPLTLTKPIGNGKKVFYYPLVENEKFTLAIFAFPPNTCIPTHDHPQMTVLSKVLYGSISCDSFDWIDNTSNVKKQGKAIYTGTNILNSNDEKVKITLPNENNIHRFQSGDEHCAVLDLLYPPYDSNFYRSCTYYRPTSVNGSIVDLMPYYPDFDCEGDSSNKELNDLHIELSKLK.

Requires Fe cation as cofactor.

The enzyme catalyses cysteamine + O2 = hypotaurine + H(+). The chain is Probable 2-aminoethanethiol dioxygenase (ado-1) from Dictyostelium discoideum (Social amoeba).